The sequence spans 107 residues: High mobility group protein HMG-I/HMG-Y (107 aa).

The disordered stretch occupies residues 1 to 107 (MSESSSKSSQ…ISQESSEEEQ (107 aa)). At Ser-2 the chain carries N-acetylserine. Lys-7 is subject to N6-acetyllysine. Ser-8 is subject to ADP-ribosylserine. Residue Ser-9 is modified to ADP-ribosylserine; alternate. Phosphoserine; alternate is present on Ser-9. Lys-15 carries the N6-acetyllysine; alternate modification. Residue Lys-15 forms a Glycyl lysine isopeptide (Lys-Gly) (interchain with G-Cter in SUMO2); alternate linkage. Residues 15-24 (KQEKDGTEKR) are compositionally biased toward basic and acidic residues. The segment at residues 21–31 (TEKRGRGRPRK) is a DNA-binding region (a.T hook 1). Residue Arg-26 is modified to Asymmetric dimethylarginine; alternate. Arg-26 is modified (omega-N-methylarginine; alternate). The residue at position 26 (Arg-26) is a Symmetric dimethylarginine; alternate. Ser-36 carries the phosphoserine; by HIPK2 and CDC2 modification. Phosphothreonine is present on residues Thr-39 and Val-42. A phosphoserine mark is found at Ser-44 and Ser-49. The residue at position 53 (Thr-53) is a Phosphothreonine; by HIPK2 and CDC2. A DNA-binding region (a.T hook 2) is located at residues 53–63 (TPKRPRGRPKG). An interaction with HIPK2 region spans residues 53–77 (TPKRPRGRPKGSKNKGAAKTRKTTT). Positions 55–74 (KRPRGRPKGSKNKGAAKTRK) are enriched in basic residues. An asymmetric dimethylarginine; by PRMT6; alternate mark is found at Arg-58 and Arg-60. Arg-58 and Arg-60 each carry omega-N-methylarginine; by PRMT6; alternate. Lys-67 is modified (phosphothreonine). Thr-78 bears the Phosphothreonine; by HIPK2 and CDC2 mark. Residues 78–89 (TPGRKPRGRPKK) constitute a DNA-binding region (a.T hook 3). Acidic residues predominate over residues 93–107 (EEEEGISQESSEEEQ). Ser-99 bears the Phosphoserine mark. Residues Ser-102 and Ser-103 each carry the phosphoserine; by CK modification.

It belongs to the HMGA family. Interacts with HIPK2. In terms of processing, constitutively phosphorylated on two or three sites. Hyperphosphorylated at early stages of apoptosis, followed by dephosphorylation and methylation, which coincides with chromatin condensation. Isoforms HMG-I and HMG-Y can be phosphorylated by HIPK2. Phosphorylation of HMG-I at Ser-36, Thr-53 and Thr-78 and of HMG-Y at Thr-42 and Thr-67 by HIPK2 modulates DNA-binding affinity. HMG-Y is not methylated. Post-translationally, methylation at Arg-58 is mutually exclusive with methylation at Arg-60.

The protein resides in the nucleus. It is found in the chromosome. Functionally, HMG-I/Y bind preferentially to the minor groove of A+T rich regions in double-stranded DNA. It is suggested that these proteins could function in nucleosome phasing and in the 3'-end processing of mRNA transcripts. They are also involved in the transcription regulation of genes containing, or in close proximity to A+T-rich regions. This chain is High mobility group protein HMG-I/HMG-Y (HMGA1), found in Homo sapiens (Human).